Reading from the N-terminus, the 369-residue chain is Galactose-1-phosphate uridylyltransferase (369 aa).

C54 and C57 together coordinate Zn(2+). Residues A63 and N79–D80 each bind UDP-alpha-D-glucose. H127 is a binding site for Zn(2+). UDP-alpha-D-glucose is bound at residue N172. H183 is a binding site for Zn(2+). H185 (tele-UMP-histidine intermediate) is an active-site residue. A UDP-alpha-D-glucose-binding site is contributed by Q187. Positions 201, 300, 317, and 319 each coordinate Fe cation. UDP-alpha-D-glucose contacts are provided by residues K332 to V335 and F337 to E338.

The protein belongs to the galactose-1-phosphate uridylyltransferase type 1 family. In terms of assembly, homodimer. Zn(2+) serves as cofactor.

The enzyme catalyses alpha-D-galactose 1-phosphate + UDP-alpha-D-glucose = alpha-D-glucose 1-phosphate + UDP-alpha-D-galactose. It functions in the pathway carbohydrate metabolism; galactose metabolism. The protein is Galactose-1-phosphate uridylyltransferase (gal7) of Schizosaccharomyces pombe (strain 972 / ATCC 24843) (Fission yeast).